The following is an 87-amino-acid chain: Probable Fe(2+)-trafficking protein (87 aa).

The protein belongs to the Fe(2+)-trafficking protein family.

Functionally, could be a mediator in iron transactions between iron acquisition and iron-requiring processes, such as synthesis and/or repair of Fe-S clusters in biosynthetic enzymes. This is Probable Fe(2+)-trafficking protein from Francisella tularensis subsp. holarctica (strain FTNF002-00 / FTA).